Here is a 434-residue protein sequence, read N- to C-terminus: Tyrosine-protein phosphatase non-receptor type 1 (434 aa).

The Tyrosine-protein phosphatase domain maps to 3–277 (IEKEFHRLDQ…RFSYLAVIEG (275 aa)). Ser50 bears the Phosphoserine mark. Substrate-binding positions include Asp181, 215–221 (CSAGIGR), and Gln262. Catalysis depends on Cys215, which acts as the Phosphocysteine intermediate. The disordered stretch occupies residues 291–319 (WKELSNEDLDPPPEHTPPPPRPPKRTSEM).

This sequence belongs to the protein-tyrosine phosphatase family. Non-receptor class 1 subfamily. Interacts with EPHA3 (phosphorylated); dephosphorylates EPHA3 and may regulate its trafficking and function. Interacts with MET. Interacts with NCK1. Post-translationally, phosphorylated on serine and threonine residues near the N-terminus by casein kinase II (CK2).

It localises to the endoplasmic reticulum membrane. The catalysed reaction is O-phospho-L-tyrosyl-[protein] + H2O = L-tyrosyl-[protein] + phosphate. May play an important role in CKII- and p60c-src-induced signal transduction cascades. May regulate the EFNA5-EPHA3 signaling pathway which modulates cell reorganization and cell-cell repulsion. May also regulate the hepatocyte growth factor receptor signaling pathway through dephosphorylation of MET. In Gallus gallus (Chicken), this protein is Tyrosine-protein phosphatase non-receptor type 1 (PTPN1).